The primary structure comprises 644 residues: Prolyl 3,4-dihydroxylase TPA1 (644 aa).

The Fe2OG dioxygenase domain maps to 141-247 (SKTDMSINTY…RLSIQGWYHI (107 aa)). The Fe cation site is built by histidine 159 and aspartate 161. Tyrosine 173 provides a ligand contact to 2-oxoglutarate. Position 227 (histidine 227) interacts with Fe cation. Residue arginine 238 participates in 2-oxoglutarate binding. Serine 607 is modified (phosphoserine).

The protein belongs to the TPA1 family. In terms of assembly, monomer and homodimer. Interacts with FRK1, eRF1 (SUP1), eRF3 (SUP35) and polyadenylate-binding protein PAB1. Interacts with ETT1. Fe(2+) is required as a cofactor. L-ascorbate serves as cofactor.

Its subcellular location is the nucleus. The catalysed reaction is [ribosomal protein uS12]-L-proline + 2-oxoglutarate + O2 = [ribosomal protein uS12]-(3S)-3-hydroxy-L-proline + succinate + CO2. The enzyme catalyses [ribosomal protein uS12]-(3S)-3-hydroxy-L-proline + 2-oxoglutarate + O2 = [ribosomal protein uS12]-(3S)-3,4-dihydroxy-L-proline + succinate + CO2. Its function is as follows. Prolyl 3,4-dihydroxylase that catalyzes 3,4-dihydroxylation of 'Pro-64' of small ribosomal subunit uS12 (RPS23A and RPS23B), thereby regulating protein translation termination efficiency. Part of a messenger ribonucleoprotein (mRNP) complex at the 3'-UTR of mRNAs. It associates specifically with components of the translation termination complex and is involved in both translation termination and in regulation of normal mRNA decay through translation termination-coupled poly(A) shortening. In Saccharomyces cerevisiae (strain ATCC 204508 / S288c) (Baker's yeast), this protein is Prolyl 3,4-dihydroxylase TPA1.